A 101-amino-acid polypeptide reads, in one-letter code: Phosphoribosyl-AMP cyclohydrolase (101 aa).

Residue aspartate 71 coordinates Mg(2+). Residue cysteine 72 coordinates Zn(2+). Residues aspartate 73 and aspartate 75 each coordinate Mg(2+). 2 residues coordinate Zn(2+): cysteine 88 and cysteine 95.

The protein belongs to the PRA-CH family. Homodimer. Requires Mg(2+) as cofactor. Zn(2+) serves as cofactor.

Its subcellular location is the cytoplasm. The catalysed reaction is 1-(5-phospho-beta-D-ribosyl)-5'-AMP + H2O = 1-(5-phospho-beta-D-ribosyl)-5-[(5-phospho-beta-D-ribosylamino)methylideneamino]imidazole-4-carboxamide. The protein operates within amino-acid biosynthesis; L-histidine biosynthesis; L-histidine from 5-phospho-alpha-D-ribose 1-diphosphate: step 3/9. Catalyzes the hydrolysis of the adenine ring of phosphoribosyl-AMP. The sequence is that of Phosphoribosyl-AMP cyclohydrolase from Bacillus cereus (strain ATCC 14579 / DSM 31 / CCUG 7414 / JCM 2152 / NBRC 15305 / NCIMB 9373 / NCTC 2599 / NRRL B-3711).